Here is a 798-residue protein sequence, read N- to C-terminus: Phenylalanine--tRNA ligase beta subunit (798 aa).

One can recognise a tRNA-binding domain in the interval 39–148 (FDAIEPIVVG…ESFRIGARLV (110 aa)). Positions 402 to 478 (WQAPVLRFRR…RVRGMDTIEP (77 aa)) constitute a B5 domain. Positions 456, 462, 465, and 466 each coordinate Mg(2+). The FDX-ACB domain occupies 708–798 (PVYPPVRRDI…SLVEKLPVRI (91 aa)).

Belongs to the phenylalanyl-tRNA synthetase beta subunit family. Type 1 subfamily. In terms of assembly, tetramer of two alpha and two beta subunits. The cofactor is Mg(2+).

It is found in the cytoplasm. It catalyses the reaction tRNA(Phe) + L-phenylalanine + ATP = L-phenylalanyl-tRNA(Phe) + AMP + diphosphate + H(+). The protein is Phenylalanine--tRNA ligase beta subunit of Nitratidesulfovibrio vulgaris (strain ATCC 29579 / DSM 644 / CCUG 34227 / NCIMB 8303 / VKM B-1760 / Hildenborough) (Desulfovibrio vulgaris).